A 539-amino-acid polypeptide reads, in one-letter code: Copine-C (539 aa).

C2 domains follow at residues 1 to 120 and 128 to 251; these read MIPS…KIVA and VTGK…PLIN. Residues Leu-23, Asp-24, Asp-30, Asp-83, Asp-85, and Asp-98 each contribute to the Ca(2+) site. A VWFA domain is found at 290-507; sequence SLMTAIDCTG…ALAQETLKEI (218 aa).

This sequence belongs to the copine family. It depends on Ca(2+) as a cofactor.

The protein is Copine-C (cpnC) of Dictyostelium discoideum (Social amoeba).